The sequence spans 747 residues: DNA repair and recombination protein RAD54-like (747 aa).

Residues 1-42 (MRRSLAPSQLARRKPEDRSSDDEDWQPGTVTPKKRKSSSETQ) are disordered. Residues 2–9 (RRSLAPSQ) form a required for chromatin remodeling, strand pairing activities and coupling of ATPase activity region. Residue Ser-38 is modified to Phosphoserine. Positions 170-345 (SRRIPGSHGC…FSLVHFVNSG (176 aa)) constitute a Helicase ATP-binding domain. 183–190 (DEMGLGKT) lines the ATP pocket. The DEGH box signature appears at 296-299 (DEGH). In terms of domain architecture, Helicase C-terminal spans 500 to 653 (VLDYILAVTR…CVVDEEQDVE (154 aa)). Position 515 is an N6-acetyllysine (Lys-515). Residue Ser-572 is modified to Phosphoserine; by NEK1.

This sequence belongs to the SNF2/RAD54 helicase family. Homohexamer. Interacts (via N-terminus) with RAD51. Interacts with NAP1L1. Interacts with BRD9; this interaction orchestrates RAD51-RAD54 complex formation. Post-translationally, acetylated. Acetylation promotes interaction with BRD9, and subsequently with RAD54, which is essential for homologous recombination (HR). Phosphorylated. Phosphorylation at Ser-572 by NEK1 specifically in G2 phase allows efficient removal of RAD51 filaments from DNA. Hardly detectable in most tissues. Dramatically increased in thymus, spleen and testis.

The protein localises to the nucleus. The enzyme catalyses ATP + H2O = ADP + phosphate + H(+). In terms of biological role, plays an essential role in homologous recombination (HR) which is a major pathway for repairing DNA double-strand breaks (DSBs), single-stranded DNA (ssDNA) gaps, and stalled or collapsed replication forks. Acts as a molecular motor during the homology search and guides RAD51 ssDNA along a donor dsDNA thereby changing the homology search from the diffusion-based mechanism to a motor-guided mechanism. Plays also an essential role in RAD51-mediated synaptic complex formation which consists of three strands encased in a protein filament formed once homology is recognized. Once DNA strand exchange occured, dissociates RAD51 from nucleoprotein filaments formed on dsDNA. Deficiency also resulted in an increased frequency of end-to-end chromosome fusions involving telomeres compared to the controls, suggesting a putative role in telomere capping. Non-homologous end joining (NHEJ) and homologous recombination (HR) represent the two major pathways of DNA double-strand break (DSB) repair in eukaryotic cells. LIG4 and RAD54L cooperate to support cellular proliferation, repair spontaneous DSBs, and prevent chromosome and single chromatid aberrations. The sequence is that of DNA repair and recombination protein RAD54-like (Rad54l) from Mus musculus (Mouse).